The primary structure comprises 449 residues: Putative F-box/LRR-repeat protein At3g44090 (449 aa).

Residues 23–77 (LASMDCLPDDLLVQILYFLPTKEAISTSLLSKRWRTLYSLVHNLDLDDYIFWHHE) enclose the F-box domain. LRR repeat units lie at residues 133 to 163 (YYNL…SLGT), 186 to 212 (YIWF…TIHH), 214 to 231 (FRPF…SVTI), 247 to 278 (TPNV…ELDL), 286 to 311 (RQVQ…HLTY), and 320 to 345 (SKKR…VLSG).

The polypeptide is Putative F-box/LRR-repeat protein At3g44090 (Arabidopsis thaliana (Mouse-ear cress)).